A 120-amino-acid polypeptide reads, in one-letter code: Ribonuclease P protein component (120 aa).

This sequence belongs to the RnpA family. As to quaternary structure, consists of a catalytic RNA component (M1 or rnpB) and a protein subunit.

The enzyme catalyses Endonucleolytic cleavage of RNA, removing 5'-extranucleotides from tRNA precursor.. In terms of biological role, RNaseP catalyzes the removal of the 5'-leader sequence from pre-tRNA to produce the mature 5'-terminus. It can also cleave other RNA substrates such as 4.5S RNA. The protein component plays an auxiliary but essential role in vivo by binding to the 5'-leader sequence and broadening the substrate specificity of the ribozyme. This is Ribonuclease P protein component from Chlamydia trachomatis serovar D (strain ATCC VR-885 / DSM 19411 / UW-3/Cx).